The primary structure comprises 640 residues: Calpain-5 (640 aa).

The Calpain catalytic domain maps to 26 to 343 (LFEDPHFPAS…FTDIIKCRLI (318 aa)). Active-site residues include C81, H252, and N284. Positions 344–496 (NTSYLSIHKT…VFTDVPSNCR (153 aa)) are domain III. One can recognise a C2 domain in the interval 499-617 (RLDEPPRTCW…HSLHLQDRSG (119 aa)).

The protein belongs to the peptidase C2 family.

Calcium-regulated non-lysosomal thiol-protease. This Rattus norvegicus (Rat) protein is Calpain-5 (Capn5).